The primary structure comprises 398 residues: S-adenosylmethionine synthase (398 aa).

His17 provides a ligand contact to ATP. Asp19 is a Mg(2+) binding site. A K(+)-binding site is contributed by Glu45. L-methionine contacts are provided by Glu58 and Gln101. The segment at 101–111 (QSPDIAQGVDK) is flexible loop. ATP contacts are provided by residues 176–178 (DGK), 243–244 (RF), Asp252, 258–259 (RK), and Lys279. L-methionine is bound at residue Asp252. Lys283 is a binding site for L-methionine.

This sequence belongs to the AdoMet synthase family. As to quaternary structure, homotetramer; dimer of dimers. Mg(2+) is required as a cofactor. Requires K(+) as cofactor.

Its subcellular location is the cytoplasm. It catalyses the reaction L-methionine + ATP + H2O = S-adenosyl-L-methionine + phosphate + diphosphate. It participates in amino-acid biosynthesis; S-adenosyl-L-methionine biosynthesis; S-adenosyl-L-methionine from L-methionine: step 1/1. Its function is as follows. Catalyzes the formation of S-adenosylmethionine (AdoMet) from methionine and ATP. The overall synthetic reaction is composed of two sequential steps, AdoMet formation and the subsequent tripolyphosphate hydrolysis which occurs prior to release of AdoMet from the enzyme. This Staphylococcus haemolyticus (strain JCSC1435) protein is S-adenosylmethionine synthase.